The following is a 109-amino-acid chain: Peptide chaperone MftB (109 aa).

This sequence belongs to the peptide chaperone MftB family.

Peptide chaperone involved in the biosynthesis of the enzyme cofactor mycofactocin (MFT). Binds MftA and MftC with high affinity, and is essential for MftC activity on MftA, likely via the formation of a ternary complex. The chain is Peptide chaperone MftB from Mycobacterium tuberculosis (strain ATCC 25618 / H37Rv).